The primary structure comprises 212 residues: uncharacterized protein (212 aa).

S-adenosyl-L-methionine is bound by residues Gly53, Glu74, and Asp97.

It belongs to the methyltransferase superfamily. YrrT family.

Could be a S-adenosyl-L-methionine-dependent methyltransferase. This is an uncharacterized protein from Bacillus cereus (strain ZK / E33L).